Reading from the N-terminus, the 198-residue chain is Ribonuclease HII (198 aa).

The 190-residue stretch at 9 to 198 folds into the RNase H type-2 domain; it reads ITVAGADEAG…LLPDQLKIDF (190 aa). Residues D15, E16, and D107 each coordinate a divalent metal cation.

Belongs to the RNase HII family. The cofactor is Mn(2+). Mg(2+) serves as cofactor.

The protein resides in the cytoplasm. The enzyme catalyses Endonucleolytic cleavage to 5'-phosphomonoester.. Its function is as follows. Endonuclease that specifically degrades the RNA of RNA-DNA hybrids. This is Ribonuclease HII from Christiangramia forsetii (strain DSM 17595 / CGMCC 1.15422 / KT0803) (Gramella forsetii).